We begin with the raw amino-acid sequence, 173 residues long: Superoxide dismutase [Cu-Zn] (173 aa).

The signal sequence occupies residues 1–19 (MKSLFIASTMVLMAFPAFA). 3 residues coordinate Cu cation: His-67, His-69, and His-92. Cys-74 and Cys-169 are joined by a disulfide. Zn(2+) contacts are provided by His-92, His-101, His-109, and Asp-112. His-147 serves as a coordination point for Cu cation.

The protein belongs to the Cu-Zn superoxide dismutase family. As to quaternary structure, homodimer. Cu cation serves as cofactor. Requires Zn(2+) as cofactor.

It localises to the periplasm. The enzyme catalyses 2 superoxide + 2 H(+) = H2O2 + O2. Functionally, destroys radicals which are normally produced within the cells and which are toxic to biological systems. The polypeptide is Superoxide dismutase [Cu-Zn] (sodC) (Brucella abortus biovar 1 (strain 9-941)).